The sequence spans 261 residues: X-box-binding protein 1 (261 aa).

At methionine 1–asparagine 185 the chain is on the cytoplasmic side. Low complexity predominate over residues threonine 27–proline 37. Residues threonine 27 to threonine 65 form a disordered region. Phosphoserine occurs at positions 47 and 68. In terms of domain architecture, bZIP spans glutamate 70–leucine 133. A basic motif region spans residues lysine 72–arginine 94. The nuclear localization signal (NLS) stretch occupies residues arginine 76–lysine 92. Residues leucine 98–leucine 133 form a leucine-zipper region. A helical; Signal-anchor for type II membrane protein transmembrane segment spans residues isoleucine 186 to serine 203. Residues cysteine 204–asparagine 261 lie on the Lumenal side of the membrane.

Belongs to the bZIP family. As to quaternary structure, isoform 1 interacts with HM13. Isoform 1 interacts with RNF139; the interaction induces ubiquitination and degradation of isoform 1. Isoform 1 interacts (via luminal domain) with DERL1; the interaction obviates the need for ectodomain shedding prior HM13/SPP-mediated XBP1 isoform 1 cleavage. Isoform 1 interacts with HDAC3 and AKT1; the interactions occur in endothelial cell (EC) under disturbed flow. Isoform 1 interacts with the oncoprotein FOS. Interacts with SIRT1. In terms of processing, isoform 1 is ubiquitinated, leading to proteasome-mediated degradation in response to ER stress. Post-translationally, X-box-binding protein 1, cytoplasmic form and luminal form are produced by intramembrane proteolytic cleavage of ER membrane-anchored isoform 1 triggered by HM13/SPP in a DERL1-RNF139-dependent and VCP/p97-independent manner. X-box-binding protein 1, luminal form is ubiquitinated leading to proteasomal degradation. Acetylated by EP300; acetylation positively regulates the transcriptional activity of XBP1. Deacetylated by SIRT1; deacetylation negatively regulates the transcriptional activity of XBP1.

It localises to the nucleus. The protein resides in the endoplasmic reticulum. Its subcellular location is the cytoplasm. It is found in the endoplasmic reticulum membrane. The protein localises to the membrane. Its function is as follows. Functions as a transcription factor during endoplasmic reticulum (ER) stress by regulating the unfolded protein response (UPR). Required for cardiac myogenesis and hepatogenesis during embryonic development, and the development of secretory tissues such as exocrine pancreas and salivary gland. Involved in terminal differentiation of B lymphocytes to plasma cells and production of immunoglobulins. Modulates the cellular response to ER stress in a PIK3R-dependent manner. Binds to the cis-acting X box present in the promoter regions of major histocompatibility complex class II genes. Involved in VEGF-induced endothelial cell (EC) proliferation and retinal blood vessel formation during embryonic development but also for angiogenesis in adult tissues under ischemic conditions. Functions also as a major regulator of the UPR in obesity-induced insulin resistance and type 2 diabetes for the management of obesity and diabetes prevention. In terms of biological role, acts as a weak transcriptional factor. Together with HDAC3, contributes to the activation of NFE2L2-mediated HMOX1 transcription factor gene expression in a PI(3)K/mTORC2/Akt-dependent signaling pathway leading to EC survival under disturbed flow/oxidative stress. Binds to the ER stress response element (ERSE) upon ER stress. Binds to the consensus 5'-GATGACGTG[TG]N(3)[AT]T-3' sequence related to cAMP responsive element (CRE)-like sequences. Associates preferentially to the HDAC3 gene promoter region in a static flow-dependent manner. Binds to the CDH5/VE-cadherin gene promoter region. This Bos taurus (Bovine) protein is X-box-binding protein 1.